A 218-amino-acid chain; its full sequence is Protein P9 (218 aa).

Its subcellular location is the virion membrane. The sequence is that of Protein P9 (IX) from Pseudoalteromonas espejiana (Bacteriophage PM2).